A 141-amino-acid polypeptide reads, in one-letter code: Translation initiation factor 2 subunit beta (141 aa).

It belongs to the eIF-2-beta/eIF-5 family. In terms of assembly, heterotrimer composed of an alpha, a beta and a gamma chain.

EIF-2 functions in the early steps of protein synthesis by forming a ternary complex with GTP and initiator tRNA. The protein is Translation initiation factor 2 subunit beta of Thermofilum pendens (strain DSM 2475 / Hrk 5).